The sequence spans 460 residues: tRNA modification GTPase MnmE (460 aa).

Residues Arg-24, Glu-81, and Lys-121 each contribute to the (6S)-5-formyl-5,6,7,8-tetrahydrofolate site. A TrmE-type G domain is found at 218 to 384 (GLVVAIAGPP…MVEALAGFAA (167 aa)). Residues 228–233 (NVGKST), 247–253 (SPHAGTT), and 272–275 (DTAG) each bind GTP. Mg(2+) is bound by residues Ser-232 and Thr-253. Position 460 (Lys-460) interacts with (6S)-5-formyl-5,6,7,8-tetrahydrofolate.

It belongs to the TRAFAC class TrmE-Era-EngA-EngB-Septin-like GTPase superfamily. TrmE GTPase family. In terms of assembly, homodimer. Heterotetramer of two MnmE and two MnmG subunits. K(+) serves as cofactor.

The protein localises to the cytoplasm. Functionally, exhibits a very high intrinsic GTPase hydrolysis rate. Involved in the addition of a carboxymethylaminomethyl (cmnm) group at the wobble position (U34) of certain tRNAs, forming tRNA-cmnm(5)s(2)U34. The polypeptide is tRNA modification GTPase MnmE (Rhodopseudomonas palustris (strain HaA2)).